Consider the following 404-residue polypeptide: Multidrug resistance protein MdtG (404 aa).

11 consecutive transmembrane segments (helical) span residues 19–39, 56–76, 90–110, 113–133, 144–164, 171–191, 222–242, 254–274, 288–308, 317–337, and 376–396; these read LGCF…PLYV, LVFS…GGLA, LGMA…QFLI, ALLG…ATQV, TLST…GLLA, PVFF…FFFI, LFVT…ILTL, IAFI…LSAP, ILIV…FVQT, FLLG…LVYN, and AVFC…WNSL.

Belongs to the major facilitator superfamily. DHA1 family. MdtG (TC 2.A.1.2.20) subfamily.

It localises to the cell inner membrane. This is Multidrug resistance protein MdtG from Salmonella typhi.